The sequence spans 481 residues: Protein FAM83E (481 aa).

Residues 1-296 are DUF1669; sequence MAASQLAALE…LYAASRPLSA (296 aa). The interval 351–481 is disordered; it reads KQETPTTTGP…ASGSGSGRRR (131 aa). The segment covering 371 to 385 has biased composition (low complexity); that stretch reads RTRTTSGPPTRPSRS. Polar residues-rich tracts occupy residues 391–400 and 465–474; these read RLSQLSGSSD and NATTSDWASG.

This sequence belongs to the FAM83 family. In terms of assembly, directly interacts (via DUF1669) with CSNK1A1, CSNK1A1L, CSNK1D and CSNK1E. May interact with RAF1.

It is found in the cytoplasm. Its subcellular location is the perinuclear region. Functionally, may play a role in MAPK signaling. In Mus musculus (Mouse), this protein is Protein FAM83E.